We begin with the raw amino-acid sequence, 416 residues long: Histidinol dehydrogenase (416 aa).

NAD(+) contacts are provided by Tyr-117, Gln-178, and Asn-201. Substrate-binding residues include Thr-224, Gln-246, and His-249. Zn(2+)-binding residues include Gln-246 and His-249. Catalysis depends on proton acceptor residues Glu-314 and His-315. His-315, Asp-348, Glu-402, and His-407 together coordinate substrate. Asp-348 is a binding site for Zn(2+). A Zn(2+)-binding site is contributed by His-407.

This sequence belongs to the histidinol dehydrogenase family. The cofactor is Zn(2+).

The catalysed reaction is L-histidinol + 2 NAD(+) + H2O = L-histidine + 2 NADH + 3 H(+). It functions in the pathway amino-acid biosynthesis; L-histidine biosynthesis; L-histidine from 5-phospho-alpha-D-ribose 1-diphosphate: step 9/9. Functionally, catalyzes the sequential NAD-dependent oxidations of L-histidinol to L-histidinaldehyde and then to L-histidine. This Staphylococcus aureus (strain bovine RF122 / ET3-1) protein is Histidinol dehydrogenase.